A 148-amino-acid chain; its full sequence is Nucleoside diphosphate kinase 1 (148 aa).

ATP is bound by residues Lys9, Phe57, Arg85, Thr91, Arg102, and Asn112. Catalysis depends on His115, which acts as the Pros-phosphohistidine intermediate.

It belongs to the NDK family. The cofactor is Mg(2+).

The catalysed reaction is a 2'-deoxyribonucleoside 5'-diphosphate + ATP = a 2'-deoxyribonucleoside 5'-triphosphate + ADP. The enzyme catalyses a ribonucleoside 5'-diphosphate + ATP = a ribonucleoside 5'-triphosphate + ADP. Functionally, major role in the synthesis of nucleoside triphosphates other than ATP. The ATP gamma phosphate is transferred to the NDP beta phosphate via a ping-pong mechanism, using a phosphorylated active-site intermediate. The chain is Nucleoside diphosphate kinase 1 (NDKP1) from Mesembryanthemum crystallinum (Common ice plant).